The primary structure comprises 596 residues: Nuclear receptor subfamily 2 group C member 2 (596 aa).

Ser19 is modified (phosphoserine; by MAPK). A Phosphoserine modification is found at Ser46. Ser55 and Ser68 each carry phosphoserine; by MAPK. Ser98 is modified (phosphoserine). Residues 114–189 constitute a DNA-binding region (nuclear receptor); it reads VEYCVVCGDK…MGMKMESVQS (76 aa). 2 NR C4-type zinc fingers span residues 117–137 and 153–177; these read CVVC…CEGC and CRSN…LKKC. A Glycyl lysine isopeptide (Lys-Gly) (interchain with G-Cter in SUMO2) cross-link involves residue Lys192. Ser219 carries the post-translational modification Phosphoserine. Lys231 is subject to N6-acetyllysine. The NR LBD domain maps to 341–583; it reads GSIHVISRDQ…SIIPYILKME (243 aa).

It belongs to the nuclear hormone receptor family. NR2 subfamily. Homodimer; can bind DNA as homodimer. Heterodimer; binds DNA as a heterodimer with NR2C1 required for chromatin remodeling and for binding to promoter regions such as globin DR1 repeats. Interacts with PCAF; the interaction preferentially occurs on the non-phosphorylated form and induces NR2C2-mediated transactivation activity and does not require the ligand-binding domain. Interacts (MAPK-mediated phosphorylated form) with NRIP1; the interaction promotes repression of NR2C2-mediated activity. Interacts with NR2C2AP; the interaction represses selective NR2C2-mediated transcriptional activity. Interacts with NLRP10. Interacts (via ligand-binding region) with transcriptional corepressor JAZF1; the interaction promotes NR2C2-mediated transcriptional repression. Phosphorylation on Ser-19 and Ser-68 is an important regulator of NR2C2-mediated transcriptional activity. Phosphorylation on these residues recruits the corepressor, NRIP1, leading to transcripional repression, whereas the non-phosphorylated form preferentially recruits the coactivator, PCAF.

Its subcellular location is the nucleus. Orphan nuclear receptor that can act as a repressor or activator of transcription. An important repressor of nuclear receptor signaling pathways such as retinoic acid receptor, retinoid X, vitamin D3 receptor, thyroid hormone receptor and estrogen receptor pathways. May regulate gene expression during the late phase of spermatogenesis. Together with NR2C1, forms the core of the DRED (direct repeat erythroid-definitive) complex that represses embryonic and fetal globin transcription including that of GATA1. Binds to hormone response elements (HREs) consisting of two 5'-AGGTCA-3' half site direct repeat consensus sequences. Plays a fundamental role in early embryonic development and embryonic stem cells. Required for normal spermatogenesis and cerebellum development. Appears to be important for neurodevelopmentally regulated behavior. Activates transcriptional activity of LHCG. Antagonist of PPARA-mediated transactivation. This Homo sapiens (Human) protein is Nuclear receptor subfamily 2 group C member 2 (NR2C2).